We begin with the raw amino-acid sequence, 369 residues long: Phenylalanine--tRNA ligase alpha subunit (369 aa).

E269 is a binding site for Mg(2+).

The protein belongs to the class-II aminoacyl-tRNA synthetase family. Phe-tRNA synthetase alpha subunit type 1 subfamily. Tetramer of two alpha and two beta subunits. The cofactor is Mg(2+).

The protein localises to the cytoplasm. The enzyme catalyses tRNA(Phe) + L-phenylalanine + ATP = L-phenylalanyl-tRNA(Phe) + AMP + diphosphate + H(+). This Brucella abortus (strain 2308) protein is Phenylalanine--tRNA ligase alpha subunit.